Consider the following 356-residue polypeptide: Serine/arginine-rich splicing factor RS41 (356 aa).

RRM domains lie at 2-74 and 96-167; these read KPVF…WTKN and KTLF…YAVK. Residues 73–92 form a disordered region; sequence KNDRGGAGRSGGSRRSSSGL. The segment covering 168–186 has biased composition (basic and acidic residues); the sequence is DDDSRGNGYSPERRRDRSP. The segment at 168-356 is disordered; the sequence is DDDSRGNGYS…SPSRSPPAEE (189 aa). A phosphoserine mark is found at S192, S194, S210, S239, S254, and S274. Residues 238–253 are compositionally biased toward basic and acidic residues; the sequence is LSPDYKRDDRRRERVA. A run of 3 repeats spans residues 267-278, 279-290, and 291-302. The interval 267 to 307 is 4 X 12 AA tandem repeats of [KE]-[GK]-R -[GR]-E-S-R-S-P-P-P-Y; the sequence is KGRGESRSPPPYEKRRESRSPPPYEKRRESRSPPPYEKRRE. Positions 268-306 are enriched in basic and acidic residues; it reads GRGESRSPPPYEKRRESRSPPPYEKRRESRSPPPYEKRR. A 4; truncated repeat occupies 303 to 307; it reads EKRRE. Residues S309, S324, S342, S347, and S351 each carry the phosphoserine modification.

Belongs to the splicing factor SR family. RS subfamily. In terms of assembly, component of the spliceosome. Interacts with RCF3 and CPL1. Interacts with DRB1/HYL1 and SE. Leaves, stem, roots and flowers.

Its subcellular location is the nucleus. The protein resides in the nucleus speckle. Its function is as follows. Required for constitutive and alternative pre-mRNA splicing. Involved in primary miRNA processing and pri-miRNA biogenesis. Binds both intronless and intron-containing pri-miRNAs. This Arabidopsis thaliana (Mouse-ear cress) protein is Serine/arginine-rich splicing factor RS41 (RS41).